The sequence spans 460 residues: MYGKIEKIHFVGIGGIGMSGIAEVLLNLGYKVSGSDLRGSDITERLARLGAEIGIGHKADNLKDVDVVVISSAVHDDNPEVVEAKRLHVPVIPRAEMLAELMRMKFGIAIAGTHGKTTTTSMAASILGHAGIDPTIVIGGKLNAIGTNAQLGQGKFLLAEADESDGSFLVLSPTIAVVTNIDADHLDHYSGGIEEIKDTFVKFINKVPFYGMAVLCLDDPNIRAILPRVKKRYMTYGLSSQADIRATHVRHDGFTTSFTAHFKGYRLGEISFTMPGAHNVLNAMACIAVALELDVPFSAIQEGFSRFGGVGRRFTIKGEPRGITVVDDYGHHPAEIKATLAAARLGWPERRIVAVFQPHRYTRTHELFGEFVTAFYDADVLILTDVYAAGEQPVEGATAERLSQEILRHGQKDVTWIPNRELIPQHLLGIVKEGDMVITLGAGSIWQQGEALVTLLEKTS.

112–118 (GTHGKTT) contributes to the ATP binding site.

This sequence belongs to the MurCDEF family.

Its subcellular location is the cytoplasm. It catalyses the reaction UDP-N-acetyl-alpha-D-muramate + L-alanine + ATP = UDP-N-acetyl-alpha-D-muramoyl-L-alanine + ADP + phosphate + H(+). The protein operates within cell wall biogenesis; peptidoglycan biosynthesis. Functionally, cell wall formation. The polypeptide is UDP-N-acetylmuramate--L-alanine ligase (Pelobacter propionicus (strain DSM 2379 / NBRC 103807 / OttBd1)).